The primary structure comprises 355 residues: Homoserine O-succinyltransferase (355 aa).

Cysteine 146 functions as the Acyl-thioester intermediate in the catalytic mechanism. Residues lysine 167 and serine 196 each contribute to the substrate site. Residue histidine 239 is the Proton acceptor of the active site. Residue glutamate 241 is part of the active site. Arginine 253 provides a ligand contact to substrate.

This sequence belongs to the MetA family.

Its subcellular location is the cytoplasm. The enzyme catalyses L-homoserine + succinyl-CoA = O-succinyl-L-homoserine + CoA. It participates in amino-acid biosynthesis; L-methionine biosynthesis via de novo pathway; O-succinyl-L-homoserine from L-homoserine: step 1/1. Its function is as follows. Transfers a succinyl group from succinyl-CoA to L-homoserine, forming succinyl-L-homoserine. The chain is Homoserine O-succinyltransferase from Methylococcus capsulatus (strain ATCC 33009 / NCIMB 11132 / Bath).